Here is a 211-residue protein sequence, read N- to C-terminus: Bifunctional transcriptional activator/DNA repair enzyme AdaA (211 aa).

Cys54 serves as the catalytic Nucleophile; methyl group acceptor from methylphosphotriester. Zn(2+)-binding residues include Cys54, Cys58, Cys85, and Cys88. In terms of domain architecture, HTH araC/xylS-type spans 102–200 (DLITEYIDKN…GQTPARFRQM (99 aa)). Positions 119–140 (ESLADICHGSPYHMHRTFKKIK) form a DNA-binding region, H-T-H motif.

Zn(2+) serves as cofactor.

The catalysed reaction is (2'-deoxyribonucleoside 5'-methylphosphotriester)-DNA + L-cysteinyl-[protein] = 2'-deoxyribonucleotide-DNA + S-methyl-L-cysteinyl-[protein] + H(+). Functionally, is involved in the adaptive response to alkylation damage in DNA caused by alkylating agents. Repairs the methylphosphotriester lesions in DNA by a direct and irreversible transfer of the methyl group to one of its own cysteine residues. Its function is as follows. The methylation of AdaA by methylphosphotriesters in DNA leads to its activation as a transcriptional regulator that activates the transcription of the ada operon which consists of adaA and adaB, and of the adjacent gene alkA. This is Bifunctional transcriptional activator/DNA repair enzyme AdaA (adaA) from Bacillus subtilis (strain 168).